A 217-amino-acid chain; its full sequence is GTP cyclohydrolase 1 (217 aa).

Zn(2+)-binding residues include cysteine 109, histidine 112, and cysteine 180.

This sequence belongs to the GTP cyclohydrolase I family. In terms of assembly, toroid-shaped homodecamer, composed of two pentamers of five dimers.

The catalysed reaction is GTP + H2O = 7,8-dihydroneopterin 3'-triphosphate + formate + H(+). Its pathway is cofactor biosynthesis; 7,8-dihydroneopterin triphosphate biosynthesis; 7,8-dihydroneopterin triphosphate from GTP: step 1/1. The protein is GTP cyclohydrolase 1 of Aliivibrio fischeri (strain ATCC 700601 / ES114) (Vibrio fischeri).